We begin with the raw amino-acid sequence, 190 residues long: Pyridoxal 5'-phosphate synthase subunit PdxT (190 aa).

46–48 (GES) contributes to the L-glutamine binding site. Cys-78 functions as the Nucleophile in the catalytic mechanism. L-glutamine contacts are provided by residues Arg-108 and 137-138 (IR). Residues His-174 and Glu-176 each act as charge relay system in the active site.

Belongs to the glutaminase PdxT/SNO family. In terms of assembly, in the presence of PdxS, forms a dodecamer of heterodimers. Only shows activity in the heterodimer.

The catalysed reaction is aldehydo-D-ribose 5-phosphate + D-glyceraldehyde 3-phosphate + L-glutamine = pyridoxal 5'-phosphate + L-glutamate + phosphate + 3 H2O + H(+). It catalyses the reaction L-glutamine + H2O = L-glutamate + NH4(+). Its pathway is cofactor biosynthesis; pyridoxal 5'-phosphate biosynthesis. Its function is as follows. Catalyzes the hydrolysis of glutamine to glutamate and ammonia as part of the biosynthesis of pyridoxal 5'-phosphate. The resulting ammonia molecule is channeled to the active site of PdxS. The sequence is that of Pyridoxal 5'-phosphate synthase subunit PdxT from Chloroflexus aurantiacus (strain ATCC 29366 / DSM 635 / J-10-fl).